A 262-amino-acid polypeptide reads, in one-letter code: Ribosomal RNA small subunit methyltransferase A (262 aa).

Residues N14, L16, G41, E63, D85, and N105 each coordinate S-adenosyl-L-methionine.

This sequence belongs to the class I-like SAM-binding methyltransferase superfamily. rRNA adenine N(6)-methyltransferase family. RsmA subfamily.

Its subcellular location is the cytoplasm. The enzyme catalyses adenosine(1518)/adenosine(1519) in 16S rRNA + 4 S-adenosyl-L-methionine = N(6)-dimethyladenosine(1518)/N(6)-dimethyladenosine(1519) in 16S rRNA + 4 S-adenosyl-L-homocysteine + 4 H(+). Functionally, specifically dimethylates two adjacent adenosines (A1518 and A1519) in the loop of a conserved hairpin near the 3'-end of 16S rRNA in the 30S particle. May play a critical role in biogenesis of 30S subunits. This is Ribosomal RNA small subunit methyltransferase A from Maridesulfovibrio salexigens (strain ATCC 14822 / DSM 2638 / NCIMB 8403 / VKM B-1763) (Desulfovibrio salexigens).